The primary structure comprises 80 residues: uncharacterized protein (80 aa).

This is an uncharacterized protein from Acidianus sp. F28 (AFV-2).